A 237-amino-acid chain; its full sequence is Putative N-acetylmannosamine-6-phosphate 2-epimerase (237 aa).

This sequence belongs to the NanE family.

The enzyme catalyses an N-acyl-D-glucosamine 6-phosphate = an N-acyl-D-mannosamine 6-phosphate. The protein operates within amino-sugar metabolism; N-acetylneuraminate degradation; D-fructose 6-phosphate from N-acetylneuraminate: step 3/5. Its function is as follows. Converts N-acetylmannosamine-6-phosphate (ManNAc-6-P) to N-acetylglucosamine-6-phosphate (GlcNAc-6-P). The sequence is that of Putative N-acetylmannosamine-6-phosphate 2-epimerase from Listeria monocytogenes serotype 4a (strain HCC23).